A 256-amino-acid chain; its full sequence is Enkurin (256 aa).

An SH3-binding motif is present at residues 83-89 (PKKPAVP). The Enkurin domain maps to 160 to 252 (KRNEEIKKAQ…IIEKHKIIYI (93 aa)). The interaction with TRPC proteins stretch occupies residues 160–255 (KRNEEIKKAQ…KHKIIYIANN (96 aa)). In terms of domain architecture, IQ spans 176 to 187 (IQENLKKAAMKR).

Microtubule inner protein component of sperm flagellar doublet microtubules. Binds calmodulin via its IQ domain. Interacts with TRPC1, TRPC2, TRPC5, but not TRPC3. Interacts with CFAP45. As to expression, expressed in airway epithelial cells.

The protein localises to the cytoplasm. The protein resides in the cytoskeleton. It localises to the cilium axoneme. It is found in the flagellum axoneme. In terms of biological role, adapter that functions to localize a calcium-sensitive signal transduction machinery in sperm to a calcium-permeable ion channel. Microtubule inner protein (MIP) part of the dynein-decorated doublet microtubules (DMTs) in cilia axoneme, which is required for motile cilia beating. This is Enkurin from Homo sapiens (Human).